Here is a 507-residue protein sequence, read N- to C-terminus: Hippocampus abundant transcript-like protein 1 (507 aa).

The disordered stretch occupies residues 1–22 (MSTDGESPEEPGWKAVASPKAS). Residues 1–51 (MSTDGESPEEPGWKAVASPKASAMPEKRGSAQAASSSWLQGFGQPSVYHAA) are Extracellular-facing. Residues 52–72 (FVIFFEFFAWGLLTTPMLTVL) form a helical membrane-spanning segment. The Cytoplasmic segment spans residues 73 to 84 (HETFPQHTFLMN). Residues 85–105 (GLIQGVKGLLSFLSAPLIGAL) form a helical membrane-spanning segment. Residues 106–113 (SDVWGRKP) are Extracellular-facing. A helical membrane pass occupies residues 114–134 (FLLGTVFFTCFPIPLMRISPW). Residues 135–136 (WY) are Cytoplasmic-facing. Residues 137–157 (FGMISVSGVFSVTFSVIFAYV) traverse the membrane as a helical segment. Over 158 to 170 (ADFTQEHERSTAY) the chain is Extracellular. Residues 171 to 191 (GWVSATFAASLVSSPAIGTYL) form a helical membrane-spanning segment. The Cytoplasmic segment spans residues 192–198 (SSNYGDS). Residues 199 to 219 (LVVLVATVVALLDICFILVAV) traverse the membrane as a helical segment. At 220-257 (PESLPEKIRPASWGAQISWKQADPFASLKKVGKDSTVL) the chain is on the extracellular side. Residues 258-278 (LICITVFLSYLPEAGQYSSFF) form a helical membrane-spanning segment. The Cytoplasmic portion of the chain corresponds to 279–283 (LYLRQ). The chain crosses the membrane as a helical span at residues 284–304 (VIGFGSVKIVAFIAMVGILSI). Residues 305-323 (LAQTVFLSKLMRSLGNKNT) lie on the Extracellular side of the membrane. Residues 324–344 (VLLGLGFQILQLAWYGFGAQA) form a helical membrane-spanning segment. At 345–347 (WMM) the chain is on the cytoplasmic side. Residues 348–368 (WAAGTVAAMSSITFPAVSALI) traverse the membrane as a helical segment. The Extracellular segment spans residues 369-389 (SRNAESDQQGVAQGIITGIRG). A helical transmembrane segment spans residues 390-410 (LCNGLGPALYGFIFYLFHVEL). The Cytoplasmic portion of the chain corresponds to 411–430 (NELGPKLDSDNDPLQGAFIP). Residues 431-451 (GPPFLFGACIVLMSFLVALFI) traverse the membrane as a helical segment. The Extracellular segment spans residues 452–507 (PEYRKTGGVQKHNNSISGSLSTPPERGSDEDIEPLLQDSNIWELSSEEPGNQCTEL). Positions 462-473 (KHNNSISGSLST) are enriched in polar residues. The interval 462–483 (KHNNSISGSLSTPPERGSDEDI) is disordered. N-linked (GlcNAc...) asparagine glycosylation occurs at Asn-464.

Belongs to the major facilitator superfamily.

Its subcellular location is the membrane. This Rattus norvegicus (Rat) protein is Hippocampus abundant transcript-like protein 1.